We begin with the raw amino-acid sequence, 195 residues long: MASHSNKGKGIAEGSSQPQSQPQPQPHQPQSPPNPPALSRYESQKRRDWNTFCQYLRNQQPPVHISQCGSNHILDFLQYLDQFGKTKVHIHGCVFFGQVEPAGQCNCPLKQAWGSLDALIGRLRAAFEENGGLPERNPFAGGGIRVFLREVRDSQAKARGVPYKKRKKRKKRNPMKSHDGEDGTTGTSSSSNLAS.

Disordered regions lie at residues 1–41 and 154–195; these read MASH…LSRY and SQAK…NLAS. A compositionally biased stretch (pro residues) spans 21-36; that stretch reads QPQPQPHQPQSPPNPP. The region spanning 40–167 is the ALOG domain; sequence RYESQKRRDW…ARGVPYKKRK (128 aa). The span at 162–175 shows a compositional bias: basic residues; the sequence is PYKKRKKRKKRNPM. Positions 165–169 match the Nuclear localization signal motif; that stretch reads KRKKR. Low complexity predominate over residues 184–195; the sequence is TTGTSSSSNLAS.

The protein belongs to the plant homeotic and developmental regulators ALOG protein family.

It is found in the nucleus. Probable transcription regulator that acts as a developmental regulator by promoting cell growth in response to light. The protein is Protein LIGHT-DEPENDENT SHORT HYPOCOTYLS 7 (LSH7) of Arabidopsis thaliana (Mouse-ear cress).